The chain runs to 587 residues: Glutamine--tRNA ligase (587 aa).

The 'HIGH' region motif lies at 58 to 68; it reads PEPNGYLHIGH. Residues 59–61 and 65–71 each bind ATP; these read EPN and HIGHAKS. The L-glutamine site is built by D91 and Y240. ATP is bound by residues T259 and 294 to 295; that span reads RL. Residues 301 to 305 carry the 'KMSKS' region motif; it reads VTSKR.

It belongs to the class-I aminoacyl-tRNA synthetase family. As to quaternary structure, monomer.

It is found in the cytoplasm. It carries out the reaction tRNA(Gln) + L-glutamine + ATP = L-glutaminyl-tRNA(Gln) + AMP + diphosphate. This chain is Glutamine--tRNA ligase, found in Bordetella parapertussis (strain 12822 / ATCC BAA-587 / NCTC 13253).